Here is a 92-residue protein sequence, read N- to C-terminus: Small ribosomal subunit protein uS19 (92 aa).

It belongs to the universal ribosomal protein uS19 family.

In terms of biological role, protein S19 forms a complex with S13 that binds strongly to the 16S ribosomal RNA. In Rhizobium etli (strain CIAT 652), this protein is Small ribosomal subunit protein uS19.